The primary structure comprises 733 residues: Catalase-peroxidase (733 aa).

Residues 1–24 (MTDDSTCPVTGGADKQVTGRGQSY) form a disordered region. Residues 96-219 (WHSAGTYRTL…LAAVQMGLIY (124 aa)) constitute a cross-link (tryptophyl-tyrosyl-methioninium (Trp-Tyr) (with M-245)). The Proton acceptor role is filled by histidine 97. A cross-link (tryptophyl-tyrosyl-methioninium (Tyr-Met) (with W-96)) is located at residues 219 to 245 (YVNPEGPNGKPDPVAAAKDIRETFARM). Heme b is bound at residue histidine 260.

It belongs to the peroxidase family. Peroxidase/catalase subfamily. As to quaternary structure, homodimer or homotetramer. Heme b serves as cofactor. Post-translationally, formation of the three residue Trp-Tyr-Met cross-link is important for the catalase, but not the peroxidase activity of the enzyme.

It catalyses the reaction H2O2 + AH2 = A + 2 H2O. The catalysed reaction is 2 H2O2 = O2 + 2 H2O. Bifunctional enzyme with both catalase and broad-spectrum peroxidase activity. The chain is Catalase-peroxidase from Methanoregula boonei (strain DSM 21154 / JCM 14090 / 6A8).